We begin with the raw amino-acid sequence, 370 residues long: MAESNKEAIDSARSNVFKESESLEGTCAKIGGYDFNNGIDHSKLLKSMVSTGFQASNLGDAMIITNQMLEWRLSHDEVPENCSEEEKKNRESVKCKIFLGFTSNLISSGVRETICYLTQHRMVDVLVTTTGGIEEDFIKCLASTYKGKFSLPGADLRSKGLNRIGNLIVPNDNYIKFEDWIIPIFDQMLIEQKTQNVLWTPSRMIARLGKEINNETSYLYWAYKNNIPVFCPSITDGSIGDMLYFHSVSNPGPGLVVDIVQDVIAMDNEAVHASPQKTGIIILGGGLPKHHICNANMMRNGADFAVFINTAQEYDGSDSGARPDEAVSWGKISSTGKAVKVHCDATIAFPLLVAETFAVKKEKASKVNGF.

It belongs to the deoxyhypusine synthase family. Homotetramer. NAD(+) serves as cofactor.

It carries out the reaction putrescine + spermidine = sym-homospermidine + propane-1,3-diamine. Its pathway is alkaloid biosynthesis; pyrrolizidine alkaloid biosynthesis. Functionally, catalyzes the transfer of an aminobutyl unit from spermidine onto putrescine. The resulting polyamine homospermidine is a precursor in the biosynthesis of pyrrolizidine alkaloids. In Senecio vulgaris (Common groundsel), this protein is Homospermidine synthase (HSS1).